The following is a 1085-amino-acid chain: Aminopeptidase N (1085 aa).

The segment at residues 1–30 (MKLTKGCAYKYIIFTVLILANILYDNKKRC) is a signal peptide (required for ER targeting and membrane association; not cleaved). The sufficient for targeting to the food vacuole stretch occupies residues 1-200 (MKLTKGCAYK…VKKNEPKIHY (200 aa)). Residues 108 to 130 (EKGDNNNNNHQNNNGNDNKKRLG) are disordered. The span at 112 to 123 (NNNNNHQNNNGN) shows a compositional bias: low complexity. The a peptide site is built by glutamate 319, glycine 460, alanine 461, and glutamate 463. Histidine 496 provides a ligand contact to Zn(2+). Glutamate 497 functions as the Proton acceptor in the catalytic mechanism. Positions 500 and 519 each coordinate Zn(2+).

The protein belongs to the peptidase M1 family. As to quaternary structure, heterodimer of the p68 form and the p35 form which are derived from the p120 precursor. Zn(2+) is required as a cofactor. In terms of processing, the full length protein appears to be cleaved into a 120 kDa precursor. This precursor is then proteolytically cleaved at the N-terminus generating a 96 kDa form which is further processed at the C-terminus into 68 kDa and 35 kDa forms that remain associated.

Its subcellular location is the parasitophorous vacuole membrane. It is found in the nucleus. It localises to the cytoplasm. The protein localises to the vacuole lumen. Inhibited by 1,10-phenanthroline, EDTA and bestatin. Inhibited by (Benzyl)Tyr-Ala (BTA). Activity is not affected by phosphoramidin, PMSF, leupeptin, iodoacetamide or pepstatin. Functionally, displays aminopeptidase activity with a broad substrate specificity. Preferentially, cleaves after Leu and Met, but also cleaves after Ala and Arg. Low activity towards Lys, Phe, Tyr, Trp, Gln, Ser and Gly and negligible activity towards Glu, Asp, Pro, Ile, Thr, Val, His and Asn. Has dipeptidase activity. Plays a role in the terminal stages of host hemoglobin digestion by cleaving the N-terminal residue of small hemoglobin-derived oligopeptides. The protein is Aminopeptidase N of Plasmodium falciparum (isolate 3D7).